The chain runs to 115 residues: Large ribosomal subunit protein bL19 (115 aa).

Belongs to the bacterial ribosomal protein bL19 family.

In terms of biological role, this protein is located at the 30S-50S ribosomal subunit interface and may play a role in the structure and function of the aminoacyl-tRNA binding site. This Streptococcus pneumoniae (strain JJA) protein is Large ribosomal subunit protein bL19.